The sequence spans 279 residues: MKVVVADHSGFCFGVEKAIDTAFKELEYKDSKDIYTLGPLIHNQQVISHLEENGIKVVSDLNSGKDGVVIIRSHGVPKDVYKDASEKKIDLVDATCPFVRKIQNIVEEYQKKGYHIVIIGDPSHPEVIGINGWCDNTAHIVKNEDDVHRIPFLDNLCIVAQTTISTSLYTELTAMIEQKSNNVLKFNTICSATRDRQNSARNLAKEVDVMIIVGGYHSSNTQKLVEICKQEKPDTTFHIETAGEIPMNILKNYESVGVTAGASTPKWIIDEVIDRINNL.

C12 lines the [4Fe-4S] cluster pocket. (2E)-4-hydroxy-3-methylbut-2-enyl diphosphate contacts are provided by H42 and H74. Residues H42 and H74 each contribute to the dimethylallyl diphosphate site. Isopentenyl diphosphate contacts are provided by H42 and H74. C96 contacts [4Fe-4S] cluster. H124 is a binding site for (2E)-4-hydroxy-3-methylbut-2-enyl diphosphate. H124 is a dimethylallyl diphosphate binding site. Residue H124 participates in isopentenyl diphosphate binding. The Proton donor role is filled by E126. A (2E)-4-hydroxy-3-methylbut-2-enyl diphosphate-binding site is contributed by T162. C190 contacts [4Fe-4S] cluster. S218, S219, N220, and S263 together coordinate (2E)-4-hydroxy-3-methylbut-2-enyl diphosphate. Residues S218, S219, N220, and S263 each contribute to the dimethylallyl diphosphate site. Positions 218, 219, 220, and 263 each coordinate isopentenyl diphosphate.

This sequence belongs to the IspH family. [4Fe-4S] cluster is required as a cofactor.

It catalyses the reaction isopentenyl diphosphate + 2 oxidized [2Fe-2S]-[ferredoxin] + H2O = (2E)-4-hydroxy-3-methylbut-2-enyl diphosphate + 2 reduced [2Fe-2S]-[ferredoxin] + 2 H(+). The catalysed reaction is dimethylallyl diphosphate + 2 oxidized [2Fe-2S]-[ferredoxin] + H2O = (2E)-4-hydroxy-3-methylbut-2-enyl diphosphate + 2 reduced [2Fe-2S]-[ferredoxin] + 2 H(+). It participates in isoprenoid biosynthesis; dimethylallyl diphosphate biosynthesis; dimethylallyl diphosphate from (2E)-4-hydroxy-3-methylbutenyl diphosphate: step 1/1. The protein operates within isoprenoid biosynthesis; isopentenyl diphosphate biosynthesis via DXP pathway; isopentenyl diphosphate from 1-deoxy-D-xylulose 5-phosphate: step 6/6. Its function is as follows. Catalyzes the conversion of 1-hydroxy-2-methyl-2-(E)-butenyl 4-diphosphate (HMBPP) into a mixture of isopentenyl diphosphate (IPP) and dimethylallyl diphosphate (DMAPP). Acts in the terminal step of the DOXP/MEP pathway for isoprenoid precursor biosynthesis. The polypeptide is 4-hydroxy-3-methylbut-2-enyl diphosphate reductase (Alkaliphilus oremlandii (strain OhILAs) (Clostridium oremlandii (strain OhILAs))).